We begin with the raw amino-acid sequence, 574 residues long: Cytochrome P450 306a1 (574 aa).

Residues 303-314 show a composition bias toward basic and acidic residues; sequence EKEQLRQSKEAD. A disordered region spans residues 303–333; that stretch reads EKEQLRQSKEADPSQEQSEADEDDEESDEED. Residues 320–333 are compositionally biased toward acidic residues; sequence SEADEDDEESDEED. Cys-505 lines the heme pocket.

The protein belongs to the cytochrome P450 family. Requires heme as cofactor. First seen at the early (syncytial) blastoderm stage 4. During cellularization of the blastoderm (stage 5), stripes of expression appear and remain through to stage 10. Expression becomes undetectable during germ band retraction (stages 11-14). By stage 15, some expression resumes in the primordium of the ring gland, so that by stage 17 strong expression is seen, but only in the ring gland. This specific localization continues throughout the larval instars (at protein level). Expressed in the prothoracic gland cells of the larval ring gland (RG). Levels decline just after the molt to the third instar then increase later during the wandering stage. Low levels of expression are seen in the larval brain and fat body. In the adult, majority of expression is restricted to the ovaries, with low levels in the head and carcass of both sexes.

Its subcellular location is the endoplasmic reticulum membrane. It localises to the microsome membrane. The enzyme catalyses 2,22,25-trideoxyecdysone + 2 reduced [adrenodoxin] + O2 + 2 H(+) = 2,22-dideoxyecdysone + 2 oxidized [adrenodoxin] + H2O. It functions in the pathway steroid biosynthesis; ecdysteroid biosynthesis. In terms of biological role, involved in the metabolism of insect hormones; responsible for ecdysteroid C25-hydroxylase activity. May be involved in the breakdown of synthetic insecticides. In Drosophila melanogaster (Fruit fly), this protein is Cytochrome P450 306a1.